The sequence spans 492 residues: Target of Myb1 membrane trafficking protein (492 aa).

Methionine 1 is modified (N-acetylmethionine). At serine 11 the chain carries Phosphoserine. The VHS domain maps to 20–152 (ATDGSLQSED…DLRRKGLEFP (133 aa)). The KRKK signature appears at 48-56 (KDAFRAVKK). At serine 160 the chain carries Phosphoserine. A Phosphothreonine modification is found at threonine 164. Residues 167–195 (RTVFNSETPSRQNSVSSNTSQRGDLSQHA) are compositionally biased toward polar residues. Residues 167-215 (RTVFNSETPSRQNSVSSNTSQRGDLSQHATPLPTPAVLPGDSPITPTPE) form a disordered region. Serine 176, serine 180, and serine 208 each carry phosphoserine. In terms of domain architecture, GAT spans 215-303 (EQIGKLRSEL…VFLRHERFER (89 aa)). The segment at 321 to 326 (DLIDMG) is clathrin box. Phosphoserine is present on residues serine 355 and serine 376. Residue lysine 385 forms a Glycyl lysine isopeptide (Lys-Gly) (interchain with G-Cter in SUMO2) linkage. Residues 392 to 463 (TDGLAGALDA…ADRLPNLASP (72 aa)) form an interaction with MYO6 region. The disordered stretch occupies residues 450-492 (RAKAADRLPNLASPSAEGPPRPSPGTAPRRKTQEKDDDMLFAL). The residue at position 462 (serine 462) is a Phosphoserine.

It belongs to the TOM1 family. In terms of assembly, found in a complex with TOLLIP; interacts (via GAT domain) with TOLLIP (via N-terminus); the interactions leads to TOM1-recruitment to endosomes and inhibition of TOLLIP binding to PtdIns(3)P. Interacts (via GAT domain and the C-terminal part of the VHS domain) with UBC/ubiquitin. Interacts (via clathrin box and C-terminus) with clathrin heavy chain. Interacts with MYO6. Interacts with TAX1BP1; CALCOCO2/NDP52 and OPTN; the interaction is indirect and is mediated by MYO6, which acts as a bridge between TOM1 and the three autophagy receptors. Interacts (via C-terminus) with ZFYVE16 (via C-terminus); interaction is required to target TOM1 and clathrin to endosomes. Interacts with LRBA. Post-translationally, monoubiquitinated. As to expression, ubiquitous. In adult brain, it is highly expressed at the mesencephalic level, in the hippocampal formation and medial lemniscus. In cerebellum, it is highly expressed in Purkinje cells and granular layers.

It is found in the cytoplasm. The protein localises to the endosome membrane. Its subcellular location is the early endosome membrane. Adapter protein that plays a role in the intracellular membrane trafficking of ubiquitinated proteins, thereby participating in autophagy, ubiquitination-dependent signaling and receptor recycling pathways. Acts as a MYO6/Myosin VI adapter protein that targets MYO6 to endocytic structures. Together with MYO6, required for autophagosomal delivery of endocytic cargo, the maturation of autophagosomes and their fusion with lysosomes. MYO6 links TOM1 with autophagy receptors, such as TAX1BP1; CALCOCO2/NDP52 and OPTN. Binds to polyubiquitinated proteins via its GAT domain. In a complex with TOLLIP, recruits ubiquitin-conjugated proteins onto early endosomes. The Tom1-Tollip complex may regulate endosomal trafficking by linking polyubiquitinated proteins to clathrin. Mediates clathrin recruitment to early endosomes by ZFYVE16. Modulates binding of TOLLIP to phosphatidylinositol 3-phosphate (PtdIns(3)P) via binding competition; the association with TOLLIP may favor the release of TOLLIP from endosomal membranes, allowing TOLLIP to commit to cargo trafficking. Acts as a phosphatidylinositol 5-phosphate (PtdIns(5)P) effector by binding to PtdIns(5)P, thereby regulating endosomal maturation. PtdIns(5)P-dependent recruitment to signaling endosomes may block endosomal maturation. Also inhibits Toll-like receptor (TLR) signaling and participates in immune receptor recycling. This chain is Target of Myb1 membrane trafficking protein, found in Mus musculus (Mouse).